Consider the following 224-residue polypeptide: Uracil-DNA glycosylase 2 (224 aa).

The active-site Proton acceptor is the D64.

This sequence belongs to the uracil-DNA glycosylase (UDG) superfamily. UNG family.

It is found in the cytoplasm. It carries out the reaction Hydrolyzes single-stranded DNA or mismatched double-stranded DNA and polynucleotides, releasing free uracil.. In terms of biological role, excises uracil residues from the DNA which can arise as a result of misincorporation of dUMP residues by DNA polymerase or due to deamination of cytosine. In Listeria monocytogenes serovar 1/2a (strain ATCC BAA-679 / EGD-e), this protein is Uracil-DNA glycosylase 2.